A 307-amino-acid chain; its full sequence is Ribonuclease Z (307 aa).

The Zn(2+) site is built by His-63, His-65, Asp-67, His-68, His-140, Asp-211, and His-269. Asp-67 serves as the catalytic Proton acceptor.

This sequence belongs to the RNase Z family. Homodimer. It depends on Zn(2+) as a cofactor.

The catalysed reaction is Endonucleolytic cleavage of RNA, removing extra 3' nucleotides from tRNA precursor, generating 3' termini of tRNAs. A 3'-hydroxy group is left at the tRNA terminus and a 5'-phosphoryl group is left at the trailer molecule.. Its function is as follows. Zinc phosphodiesterase, which displays some tRNA 3'-processing endonuclease activity. Probably involved in tRNA maturation, by removing a 3'-trailer from precursor tRNA. The polypeptide is Ribonuclease Z (Bacillus licheniformis (strain ATCC 14580 / DSM 13 / JCM 2505 / CCUG 7422 / NBRC 12200 / NCIMB 9375 / NCTC 10341 / NRRL NRS-1264 / Gibson 46)).